We begin with the raw amino-acid sequence, 107 residues long: MAFGDYPAEYNPKVHGPYDPARFYGKADVPFGQVKLGEIGAWLGRRNKTPNAVAGAVSRAWWRWQHKYVFPKRAGIAPFFQLTVASMTFFYLINYTKLKHHRNYKYH.

It belongs to the ATPase F chain family. F-type ATPases have 2 components, CF(1) - the catalytic core - and CF(0) - the membrane proton channel. CF(0) seems to have nine subunits: a, b, c, d, e, f, g, F6 and 8 (or A6L).

The protein localises to the mitochondrion membrane. Functionally, mitochondrial membrane ATP synthase (F(1)F(0) ATP synthase or Complex V) produces ATP from ADP in the presence of a proton gradient across the membrane which is generated by electron transport complexes of the respiratory chain. F-type ATPases consist of two structural domains, F(1) - containing the extramembraneous catalytic core and F(0) - containing the membrane proton channel, linked together by a central stalk and a peripheral stalk. During catalysis, ATP synthesis in the catalytic domain of F(1) is coupled via a rotary mechanism of the central stalk subunits to proton translocation. Part of the complex F(0) domain. Minor subunit located with subunit a in the membrane. The sequence is that of Putative ATP synthase subunit f, mitochondrial from Drosophila melanogaster (Fruit fly).